We begin with the raw amino-acid sequence, 270 residues long: GHMVNAIYQIDEFANLGANSIETDVSFDDNANPEYTYHGIPCDCGRSCLKWENYNDFLKGLRSATTPGNSKYQSKLILVVFDLKTGSLYDNQASEAGKKLAKNLLKHYWNNGNNGGRAYIVLSIPDLNHYPLIKGFTDTLKQEGHPELLEKVGYDFSGNDAVGDVAKAYKKAGVSGHVWQSDGITNCLLRGLTRVKEAVANRDSGNGYINKVYYWTVDKRATTRDALDAGVDGVMTNYPDVIADVMNEAAYKNKVRLATYEDSPWVTFKK.

His-2 is a catalytic residue. Mg(2+) is bound by residues Glu-22 and Asp-24. Residue His-38 is the Nucleophile of the active site. Disulfide bonds link Cys-42-Cys-48 and Cys-44-Cys-187. Mg(2+) is bound at residue Asp-82.

This sequence belongs to the arthropod phospholipase D family. Class II subfamily. Requires Mg(2+) as cofactor. Expressed by the venom gland.

It localises to the secreted. It carries out the reaction an N-(acyl)-sphingosylphosphocholine = an N-(acyl)-sphingosyl-1,3-cyclic phosphate + choline. The enzyme catalyses an N-(acyl)-sphingosylphosphoethanolamine = an N-(acyl)-sphingosyl-1,3-cyclic phosphate + ethanolamine. The catalysed reaction is a 1-acyl-sn-glycero-3-phosphocholine = a 1-acyl-sn-glycero-2,3-cyclic phosphate + choline. It catalyses the reaction a 1-acyl-sn-glycero-3-phosphoethanolamine = a 1-acyl-sn-glycero-2,3-cyclic phosphate + ethanolamine. Its function is as follows. Dermonecrotic toxins cleave the phosphodiester linkage between the phosphate and headgroup of certain phospholipids (sphingolipid and lysolipid substrates), forming an alcohol (often choline) and a cyclic phosphate. This toxin acts on sphingomyelin (SM). It may also act on ceramide phosphoethanolamine (CPE), lysophosphatidylcholine (LPC) and lysophosphatidylethanolamine (LPE), but not on lysophosphatidylserine (LPS), and lysophosphatidylglycerol (LPG). It acts by transphosphatidylation, releasing exclusively cyclic phosphate products as second products. Induces dermonecrosis, hemolysis, increased vascular permeability, edema, inflammatory response, and platelet aggregation. This is Dermonecrotic toxin LhSicTox-alphaIA2aiii from Loxosceles hirsuta (Recluse spider).